A 492-amino-acid chain; its full sequence is Homoserine O-acetyltransferase (492 aa).

The 306-residue stretch at 47–352 folds into the AB hydrolase-1 domain; the sequence is NAILVFHALS…KSIYGHDAFL (306 aa). Residue S152 is the Nucleophile of the active site. R221 provides a ligand contact to substrate. Catalysis depends on residues D315 and H348. Residue D349 coordinates substrate. CBS domains lie at 375 to 431 and 440 to 492; these read MTKN…ENSI and MTKN…TITI.

Belongs to the AB hydrolase superfamily. MetX family. Homodimer.

It localises to the cytoplasm. The catalysed reaction is L-homoserine + acetyl-CoA = O-acetyl-L-homoserine + CoA. The protein operates within amino-acid biosynthesis; L-methionine biosynthesis via de novo pathway; O-acetyl-L-homoserine from L-homoserine: step 1/1. Its function is as follows. Transfers an acetyl group from acetyl-CoA to L-homoserine, forming acetyl-L-homoserine. The protein is Homoserine O-acetyltransferase of Methanococcus vannielii (strain ATCC 35089 / DSM 1224 / JCM 13029 / OCM 148 / SB).